The chain runs to 363 residues: Ribosomal RNA large subunit methyltransferase M (363 aa).

S-adenosyl-L-methionine contacts are provided by residues S194, 227 to 230 (CPGG), D246, D266, and D284. K313 (proton acceptor) is an active-site residue.

Belongs to the class I-like SAM-binding methyltransferase superfamily. RNA methyltransferase RlmE family. RlmM subfamily. As to quaternary structure, monomer.

It localises to the cytoplasm. It catalyses the reaction cytidine(2498) in 23S rRNA + S-adenosyl-L-methionine = 2'-O-methylcytidine(2498) in 23S rRNA + S-adenosyl-L-homocysteine + H(+). Its function is as follows. Catalyzes the 2'-O-methylation at nucleotide C2498 in 23S rRNA. The protein is Ribosomal RNA large subunit methyltransferase M of Mannheimia succiniciproducens (strain KCTC 0769BP / MBEL55E).